The following is a 447-amino-acid chain: Adenylosuccinate synthetase (447 aa).

Residues 35–41 (GDEGKGK) and 63–65 (GHT) contribute to the GTP site. Aspartate 36 (proton acceptor) is an active-site residue. Aspartate 36 and glycine 63 together coordinate Mg(2+). Residues 36 to 39 (DEGK), 61 to 64 (NAGH), threonine 153, arginine 167, asparagine 245, threonine 260, and arginine 324 each bind IMP. Residue histidine 64 is the Proton donor of the active site. 320-326 (VTTKRKR) contributes to the substrate binding site. GTP is bound by residues arginine 326, 352 to 354 (KLD), and 435 to 437 (GVG).

This sequence belongs to the adenylosuccinate synthetase family. In terms of assembly, homodimer. Mg(2+) is required as a cofactor.

The protein localises to the cytoplasm. The catalysed reaction is IMP + L-aspartate + GTP = N(6)-(1,2-dicarboxyethyl)-AMP + GDP + phosphate + 2 H(+). It participates in purine metabolism; AMP biosynthesis via de novo pathway; AMP from IMP: step 1/2. Plays an important role in the de novo pathway and in the salvage pathway of purine nucleotide biosynthesis. Catalyzes the first committed step in the biosynthesis of AMP from IMP. The protein is Adenylosuccinate synthetase of Drosophila sechellia (Fruit fly).